A 120-amino-acid chain; its full sequence is Ribosome-binding factor A (120 aa).

This sequence belongs to the RbfA family. As to quaternary structure, monomer. Binds 30S ribosomal subunits, but not 50S ribosomal subunits or 70S ribosomes.

It localises to the cytoplasm. In terms of biological role, one of several proteins that assist in the late maturation steps of the functional core of the 30S ribosomal subunit. Associates with free 30S ribosomal subunits (but not with 30S subunits that are part of 70S ribosomes or polysomes). Required for efficient processing of 16S rRNA. May interact with the 5'-terminal helix region of 16S rRNA. This Verminephrobacter eiseniae (strain EF01-2) protein is Ribosome-binding factor A.